The primary structure comprises 252 residues: Proteasome subunit alpha type-3 (252 aa).

This sequence belongs to the peptidase T1A family. As to quaternary structure, the 26S proteasome consists of a 20S proteasome core and two 19S regulatory subunits. The 20S proteasome core is composed of 28 subunits that are arranged in four stacked rings, resulting in a barrel-shaped structure. The two end rings are each formed by seven alpha subunits, and the two central rings are each formed by seven beta subunits. The catalytic chamber with the active sites is on the inside of the barrel.

Its subcellular location is the cytoplasm. The protein resides in the nucleus. In terms of biological role, the proteasome is a multicatalytic proteinase complex which is characterized by its ability to cleave peptides with Arg, Phe, Tyr, Leu, and Glu adjacent to the leaving group at neutral or slightly basic pH. The proteasome has an ATP-dependent proteolytic activity. The protein is Proteasome subunit alpha type-3 of Acanthamoeba castellanii (Amoeba).